Reading from the N-terminus, the 191-residue chain is Fe/S biogenesis protein NfuA (191 aa).

[4Fe-4S] cluster contacts are provided by C149 and C152.

This sequence belongs to the NfuA family. Homodimer. It depends on [4Fe-4S] cluster as a cofactor.

Functionally, involved in iron-sulfur cluster biogenesis. Binds a 4Fe-4S cluster, can transfer this cluster to apoproteins, and thereby intervenes in the maturation of Fe/S proteins. Could also act as a scaffold/chaperone for damaged Fe/S proteins. The chain is Fe/S biogenesis protein NfuA from Photorhabdus laumondii subsp. laumondii (strain DSM 15139 / CIP 105565 / TT01) (Photorhabdus luminescens subsp. laumondii).